We begin with the raw amino-acid sequence, 294 residues long: 2-methoxy-6-polyprenyl-1,4-benzoquinol methylase, mitochondrial (294 aa).

A mitochondrion-targeting transit peptide spans 1–10 (MALRSAAGRL). Residues T100, D136, and 166–167 (DA) each bind S-adenosyl-L-methionine.

The protein belongs to the class I-like SAM-binding methyltransferase superfamily. MenG/UbiE family. Component of a multi-subunit COQ enzyme complex.

The protein resides in the mitochondrion inner membrane. It catalyses the reaction a 2-methoxy-6-(all-trans-polyprenyl)benzene-1,4-diol + S-adenosyl-L-methionine = a 5-methoxy-2-methyl-3-(all-trans-polyprenyl)benzene-1,4-diol + S-adenosyl-L-homocysteine + H(+). It participates in cofactor biosynthesis; ubiquinone biosynthesis. Its function is as follows. Methyltransferase required for the conversion of 2-polyprenyl-6-methoxy-1,4-benzoquinol (DDMQH2) to 2-polyprenyl-3-methyl-6-methoxy-1,4-benzoquinol (DMQH2). This is 2-methoxy-6-polyprenyl-1,4-benzoquinol methylase, mitochondrial from Oryza sativa subsp. japonica (Rice).